The chain runs to 211 residues: Formate dehydrogenase, cytochrome b556(fdo) subunit (211 aa).

Topologically, residues 1–17 (MKRRDTIVRYTAPERIN) are cytoplasmic. His18 serves as a coordination point for heme b. A helical membrane pass occupies residues 18–32 (HWITAFCFILAAVSG). Topologically, residues 33–53 (LGFLFPSFNWLMQIMGTPQLA) are periplasmic. A helical membrane pass occupies residues 54 to 72 (RILHPFVGVVMFASFIIMF). His57 provides a ligand contact to heme b. Residues 73 to 112 (FRYWHHNLINRDDIFWAKNIRKIVVNEEVGDTGRYNFGQK) are Cytoplasmic-facing. A helical transmembrane segment spans residues 113–130 (CVFWAAIIFLVLLLVSGV). Topologically, residues 131–151 (IIWRPYFAPAFSIPVIRFALM) are periplasmic. Residues 152–170 (LHSFAAVALIVVIMVHIYA) form a helical membrane-spanning segment. His153 and His167 together coordinate heme b. At 171–211 (ALWVKGTITAMVEGWVTSAWAKKHHPRWYREVRKTTEKKAE) the chain is on the cytoplasmic side.

The protein belongs to the formate dehydrogenase gamma subunit family. In terms of assembly, formate dehydrogenase is a membrane-bound complex, formed by subunits alpha, beta and gamma. It depends on heme as a cofactor.

Its subcellular location is the cell inner membrane. Allows to use formate as major electron donor during aerobic respiration. Subunit gamma is probably the cytochrome b556(FDO) component of the formate dehydrogenase. The chain is Formate dehydrogenase, cytochrome b556(fdo) subunit (fdoI) from Escherichia coli O157:H7.